An 84-amino-acid chain; its full sequence is Small ribosomal subunit protein bS16c (84 aa).

This sequence belongs to the bacterial ribosomal protein bS16 family.

The protein localises to the plastid. It is found in the chloroplast. This is Small ribosomal subunit protein bS16c from Mesostigma viride (Green alga).